The sequence spans 39 residues: MIEPLLCGIVLGLVPVTLLGLFVSAWNQYRRSSSMPDWE.

A helical transmembrane segment spans residues 5-25 (LLCGIVLGLVPVTLLGLFVSA).

Belongs to the PetG family. As to quaternary structure, the 4 large subunits of the cytochrome b6-f complex are cytochrome b6, subunit IV (17 kDa polypeptide, PetD), cytochrome f and the Rieske protein, while the 4 small subunits are PetG, PetL, PetM and PetN. The complex functions as a dimer.

It is found in the cellular thylakoid membrane. Its function is as follows. Component of the cytochrome b6-f complex, which mediates electron transfer between photosystem II (PSII) and photosystem I (PSI), cyclic electron flow around PSI, and state transitions. PetG is required for either the stability or assembly of the cytochrome b6-f complex. The polypeptide is Cytochrome b6-f complex subunit 5 (Prochlorococcus marinus (strain NATL1A)).